The primary structure comprises 88 residues: Large ribosomal subunit protein uL23c (88 aa).

It belongs to the universal ribosomal protein uL23 family. As to quaternary structure, part of the 50S ribosomal subunit.

It is found in the plastid. The protein resides in the chloroplast. Functionally, binds to 23S rRNA. This chain is Large ribosomal subunit protein uL23c (rpl23), found in Spirogyra maxima (Green alga).